The following is a 338-amino-acid chain: MSKPIVLSGVQPSGELSIGNYLGALRQWQQMQDDYDCQYCVVDLHAITVRQDPKALHEATLDALAICLAVGVDPKKSTLFVQSHVPEHAQLGWLLNCYTQMGELSRMTQFKDKSARYANDVNVGLFGYPVLMAADILLYGAHQVPVGSDQKQHLELARDIATRFNNIYSPENPIFTIPEPYIPTVNARVMSLQDATKKMSKSDDNRKNVITLLEDPKSIIKKINKAQTDTETPPRIAHDWDNKAGISNLMGLYSAATGMSFEEIEAKYQGVEMYGPFKKDVGEALVSMLEPIQAEYHRIREDRGYMNEVMRQGADKASARAAETLKKVYEVVGFVGRP.

Residues 11–13 (QPS) and 19–20 (GN) contribute to the ATP site. Positions 12–20 (PSGELSIGN) match the 'HIGH' region motif. Position 135 (Asp-135) interacts with L-tryptophan. Residues 147 to 149 (GSD), Val-189, and 198 to 202 (KMSKS) contribute to the ATP site. Residues 198–202 (KMSKS) carry the 'KMSKS' region motif.

This sequence belongs to the class-I aminoacyl-tRNA synthetase family. In terms of assembly, homodimer.

The protein localises to the cytoplasm. The enzyme catalyses tRNA(Trp) + L-tryptophan + ATP = L-tryptophyl-tRNA(Trp) + AMP + diphosphate + H(+). In terms of biological role, catalyzes the attachment of tryptophan to tRNA(Trp). This Vibrio vulnificus (strain CMCP6) protein is Tryptophan--tRNA ligase.